We begin with the raw amino-acid sequence, 779 residues long: Protein WEAK CHLOROPLAST MOVEMENT UNDER BLUE LIGHT-like 1 (779 aa).

The interval 1–119 is disordered; the sequence is MEDLKTTDAL…NAVSPRPLYS (119 aa). The span at 79–88 shows a compositional bias: polar residues; sequence DSPTTPSFVS. Ser139 is subject to Phosphoserine. 3 coiled-coil regions span residues 182 to 503, 532 to 587, and 657 to 715; these read RMKV…KQRE, KETR…ESRL, and AVSE…KWRE. The segment covering 650–661 has biased composition (low complexity); that stretch reads ANARVAAAVSEV. Disordered regions lie at residues 650–674 and 694–759; these read ANAR…SLEK and EKAE…NPVK. 2 stretches are compositionally biased toward basic and acidic residues: residues 662–674 and 694–718; these read GEAK…SLEK and EKAE…EVSE. The segment covering 741–753 has biased composition (polar residues); it reads TSVSNETETNPIP.

This sequence belongs to the WEB family.

The protein is Protein WEAK CHLOROPLAST MOVEMENT UNDER BLUE LIGHT-like 1 (WEL1) of Arabidopsis thaliana (Mouse-ear cress).